We begin with the raw amino-acid sequence, 376 residues long: Beta-centractin (376 aa).

M1 carries the N-acetylmethionine modification. Y4 is modified (3'-nitrotyrosine).

The protein belongs to the actin family. ARP1 subfamily.

It localises to the cytoplasm. Its subcellular location is the cytoskeleton. The protein localises to the microtubule organizing center. The protein resides in the centrosome. Functionally, component of a multi-subunit complex involved in microtubule based vesicle motility. It is associated with the centrosome. This chain is Beta-centractin (ACTR1B), found in Bos taurus (Bovine).